The sequence spans 373 residues: RNA 3'-terminal phosphate cyclase-like protein (373 aa).

Belongs to the RNA 3'-terminal cyclase family. Type 2 subfamily. As to quaternary structure, part of the small subunit (SSU) processome, composed of more than 70 proteins and the RNA chaperone small nucleolar RNA (snoRNA) U3. Interacts with BMS1.

Its subcellular location is the nucleus. The protein resides in the nucleolus. As part of the small subunit (SSU) processome, it plays a role in 40S-ribosomal-subunit biogenesis in the early pre-rRNA processing steps at sites A0, A1 and A2 that are required for proper maturation of the 18S RNA. Activates BMS1 by promoting GDP/GTP exchange. Does not have cyclase activity. The sequence is that of RNA 3'-terminal phosphate cyclase-like protein (RCL1) from Bos taurus (Bovine).